Consider the following 432-residue polypeptide: Zinc finger protein 829 (432 aa).

One can recognise a KRAB domain in the interval 35 to 106 (VMFRDVSIDF…DRELTRGLCS (72 aa)). The segment at 156–178 (WECKICGKTFNQNSQFIQHQRIH) adopts a C2H2-type 1 zinc-finger fold. The segment at 184–206 (YESKEYGKSFSRGSLVTRHQRIH) adopts a C2H2-type 2; degenerate zinc-finger fold. 8 consecutive C2H2-type zinc fingers follow at residues 212 to 234 (YECK…QRIH), 240 to 262 (YECK…QRIH), 268 to 290 (YECK…LRIH), 296 to 318 (YECK…QRMH), 324 to 346 (YECK…HRIH), 352 to 374 (YECE…QRIH), 380 to 402 (YECN…QRIH), and 408 to 430 (YDCK…EGIH).

The protein belongs to the krueppel C2H2-type zinc-finger protein family.

It localises to the nucleus. In terms of biological role, may be involved in transcriptional regulation. The polypeptide is Zinc finger protein 829 (ZNF829) (Homo sapiens (Human)).